Here is a 216-residue protein sequence, read N- to C-terminus: Probable RNA 2'-phosphotransferase 1 (216 aa).

The protein belongs to the KptA/TPT1 family.

Removes the 2'-phosphate from RNA via an intermediate in which the phosphate is ADP-ribosylated by NAD followed by a presumed transesterification to release the RNA and generate ADP-ribose 1''-2''-cyclic phosphate (APPR&gt;P). May function as an ADP-ribosylase. This is Probable RNA 2'-phosphotransferase 1 (kptA1) from Archaeoglobus fulgidus (strain ATCC 49558 / DSM 4304 / JCM 9628 / NBRC 100126 / VC-16).